A 179-amino-acid chain; its full sequence is Large ribosomal subunit protein bL17 (179 aa).

A compositionally biased stretch (basic and acidic residues) spans 123-161 (KEKDTKKKDDSKKSDDKKTSKKEAGFKSSKGESEHKKNT). Residues 123–179 (KEKDTKKKDDSKKSDDKKTSKKEAGFKSSKGESEHKKNTDQVVDSSSNRRYNRVKGS) are disordered. Residues 162–171 (DQVVDSSSNR) are compositionally biased toward polar residues.

The protein belongs to the bacterial ribosomal protein bL17 family. As to quaternary structure, part of the 50S ribosomal subunit. Contacts protein L32.

This Treponema denticola (strain ATCC 35405 / DSM 14222 / CIP 103919 / JCM 8153 / KCTC 15104) protein is Large ribosomal subunit protein bL17.